Reading from the N-terminus, the 427-residue chain is Enolase (427 aa).

Position 163 (Q163) interacts with (2R)-2-phosphoglycerate. Catalysis depends on E205, which acts as the Proton donor. Mg(2+) is bound by residues D242, E285, and D312. (2R)-2-phosphoglycerate-binding residues include K337, R366, S367, and K388. K337 (proton acceptor) is an active-site residue.

Belongs to the enolase family. Requires Mg(2+) as cofactor.

It is found in the cytoplasm. Its subcellular location is the secreted. The protein localises to the cell surface. It carries out the reaction (2R)-2-phosphoglycerate = phosphoenolpyruvate + H2O. It functions in the pathway carbohydrate degradation; glycolysis; pyruvate from D-glyceraldehyde 3-phosphate: step 4/5. Its function is as follows. Catalyzes the reversible conversion of 2-phosphoglycerate (2-PG) into phosphoenolpyruvate (PEP). It is essential for the degradation of carbohydrates via glycolysis. This Thiobacillus denitrificans (strain ATCC 25259 / T1) protein is Enolase.